Consider the following 487-residue polypeptide: N-succinylglutamate 5-semialdehyde dehydrogenase (487 aa).

221–226 contributes to the NAD(+) binding site; it reads GSSRTG. Active-site residues include Glu244 and Cys278.

This sequence belongs to the aldehyde dehydrogenase family. AstD subfamily.

It catalyses the reaction N-succinyl-L-glutamate 5-semialdehyde + NAD(+) + H2O = N-succinyl-L-glutamate + NADH + 2 H(+). The protein operates within amino-acid degradation; L-arginine degradation via AST pathway; L-glutamate and succinate from L-arginine: step 4/5. Catalyzes the NAD-dependent reduction of succinylglutamate semialdehyde into succinylglutamate. The chain is N-succinylglutamate 5-semialdehyde dehydrogenase from Pseudomonas putida (strain ATCC 700007 / DSM 6899 / JCM 31910 / BCRC 17059 / LMG 24140 / F1).